Here is a 260-residue protein sequence, read N- to C-terminus: MGSILMATIKEVKEQLAILRDLDDPRWASFEEDSRTGVQAAIRKRRKAILAELAEEERLEILLNYEKSLYARGIELIAGVDEVGRGPLAGPVVAAAVILPKLCKIKGLNDSKKIPKSKHEAIYNQVMKEAVAVGIGIKDNYVIDDVNIYEATKLAMIEAIEKLNPQPEHLLIDAMNLDLPIEQTSIIKGDANSLSIAAASIVAKVTRDKMMADYEQEFPGYAFAKNAGYGTKEHLSGIDKFGVTPIHRRSFEPIKSIIKK.

The 186-residue stretch at 75 to 260 (ELIAGVDEVG…FEPIKSIIKK (186 aa)) folds into the RNase H type-2 domain. Residues Asp81, Glu82, and Asp173 each contribute to the a divalent metal cation site.

The protein belongs to the RNase HII family. It depends on Mn(2+) as a cofactor. Requires Mg(2+) as cofactor.

The protein localises to the cytoplasm. The catalysed reaction is Endonucleolytic cleavage to 5'-phosphomonoester.. In terms of biological role, endonuclease that specifically degrades the RNA of RNA-DNA hybrids. The sequence is that of Ribonuclease HII from Streptococcus thermophilus (strain CNRZ 1066).